Consider the following 468-residue polypeptide: Cysteine--tRNA ligase (468 aa).

Residue Cys-29 coordinates Zn(2+). The 'HIGH' region signature appears at 31–41 (PTVYNYIHIGN). 3 residues coordinate Zn(2+): Cys-209, His-234, and Glu-238. Positions 266-270 (KMSKS) match the 'KMSKS' region motif. Position 269 (Lys-269) interacts with ATP. Ser-270 carries the post-translational modification Phosphoserine.

The protein belongs to the class-I aminoacyl-tRNA synthetase family. Monomer. Zn(2+) is required as a cofactor.

The protein resides in the cytoplasm. It catalyses the reaction tRNA(Cys) + L-cysteine + ATP = L-cysteinyl-tRNA(Cys) + AMP + diphosphate. In Oceanobacillus iheyensis (strain DSM 14371 / CIP 107618 / JCM 11309 / KCTC 3954 / HTE831), this protein is Cysteine--tRNA ligase.